The following is a 49-amino-acid chain: Zinc-containing ferredoxin (49 aa).

The interval 1–36 is N-terminal extension; it reads GIDPNYRTSRQVVGEHQGHKVYGPVDPPKVLGIHGT. Zn(2+) is bound by residues H16 and H19. The residue at position 29 (K29) is an N6-methyllysine. Position 34 (H34) interacts with Zn(2+). The interval 37–49 is ferredoxin; that stretch reads IVXVDFDLCIADG. [3Fe-4S] cluster is bound at residue C45.

It depends on [3Fe-4S] cluster as a cofactor. [4Fe-4S] cluster is required as a cofactor. Zn(2+) serves as cofactor.

Ferredoxins are iron-sulfur proteins that transfer electrons in a wide variety of metabolic reactions. The chain is Zinc-containing ferredoxin (zfx) from Acidianus infernus.